Consider the following 351-residue polypeptide: MEGAALLKIFVVCIWVQQNHPGWTVAGQFQEKKRFTEEVIEYFQKKVSPVHLKILLTSDEAWKRFVRVAELPREEADALYEALKNLTPYVAIEDKDMQQKEQQFREWFLKEFPQIRWKIQESIERLRVIANEIEKVHRGCVIANVVSGSTGILSVIGVMLAPFTAGLSLSITAAGVGLGIASATAGIASSIVENTYTRSAELTASRLTATSTDQLEALRDILRDITPNVLSFALDFDEATKMIANDVHTLRRSKATVGRPLIAWRYVPINVVETLRTRGAPTRIVRKVARNLGKATSGVLVVLDVVNLVQDSLDLHKGAKSESAESLRQWAQELEENLNELTHIHQSLKAG.

The first 21 residues, 1 to 21, serve as a signal peptide directing secretion; sequence MEGAALLKIFVVCIWVQQNHP.

The protein belongs to the apolipoprotein L family. In terms of tissue distribution, widely expressed; the highest levels are in spinal cord, placenta, adrenal gland; also detected in spleen, bone marrow, uterus, trachea, mammary gland and testis; levels are low in brain, heart and pancreas.

The protein localises to the secreted. May play a role in lipid exchange and transport throughout the body. May participate in reverse cholesterol transport from peripheral cells to the liver. In Homo sapiens (Human), this protein is Apolipoprotein L4 (APOL4).